Consider the following 326-residue polypeptide: Olfactory receptor 11H1 (326 aa).

The Extracellular segment spans residues 1–44; the sequence is MCPLTLQVTGLMNVSEPNSSFAFVNEFILQGFSCEWTIQIFLFS. Residues asparagine 13 and asparagine 18 are each glycosylated (N-linked (GlcNAc...) asparagine). The helical transmembrane segment at 45-65 threads the bilayer; that stretch reads LFTTTYALTITGNGAIAFVLW. Residues 66 to 72 lie on the Cytoplasmic side of the membrane; that stretch reads CDRRLHT. Residues 73-93 traverse the membrane as a helical segment; sequence PMYMFLGNFSFLEIWYVSSTV. Residues 94-112 are Extracellular-facing; that stretch reads PKMLVNFLSEKKNISFAGC. Asparagine 106 carries an N-linked (GlcNAc...) asparagine glycan. Cysteines 112 and 194 form a disulfide. Residues 113–133 traverse the membrane as a helical segment; sequence FLQFYFFFSLGTSECLLLTVM. Over 134–158 the chain is Cytoplasmic; the sequence is AFDQYLAICRPLLYPNIMTGHLYAK. Residues 159-179 traverse the membrane as a helical segment; it reads LVILCWVCGFLWFLIPIVLIS. Residues 180-216 lie on the Extracellular side of the membrane; the sequence is QMPFCGPNIIDHVVCDPGPRFALDCVSAPRIQLFCYT. A helical transmembrane segment spans residues 217-237; it reads LSSLVIFGNFLFIIGSYTLVL. The Cytoplasmic segment spans residues 238–259; that stretch reads KAMLGMPSSTGRHKAFSTCGSH. A helical membrane pass occupies residues 260–280; that stretch reads LAVVSLCYSSLMVMYVSPGLG. Residues 281-287 lie on the Extracellular side of the membrane; that stretch reads HSTGMQK. A helical transmembrane segment spans residues 288-308; sequence IETLFYAMVTPLFNPLIYSLQ. The Cytoplasmic segment spans residues 309–326; that stretch reads NKEIKAALRKVLGSSNII.

It belongs to the G-protein coupled receptor 1 family.

Its subcellular location is the cell membrane. Its function is as follows. Odorant receptor. The chain is Olfactory receptor 11H1 (OR11H1) from Homo sapiens (Human).